The primary structure comprises 122 residues: Large ribosomal subunit protein uL18 (122 aa).

This sequence belongs to the universal ribosomal protein uL18 family. Part of the 50S ribosomal subunit; part of the 5S rRNA/L5/L18/L25 subcomplex. Contacts the 5S and 23S rRNAs.

Functionally, this is one of the proteins that bind and probably mediate the attachment of the 5S RNA into the large ribosomal subunit, where it forms part of the central protuberance. The chain is Large ribosomal subunit protein uL18 from Desulfitobacterium hafniense (strain Y51).